We begin with the raw amino-acid sequence, 863 residues long: MHQSGSVSLCRSAISVLVATALYSPIALASTVEYGETVDGVVLEKDIQLVYGTANNTKINPGGEQHIKEFGVSNNTEINGGYQYIEMNGAAEYSVLNDGYQIVQMGGAANQTTLNNGVLQVYGAANDTTIKGGRLIVEKDGGAVFVAIEKGGLLEVKEGGFAFAVDQKAGGAIKTTTRAMEVFGTNRLGQFDIKNGIANNMLLENGGSLRVEENDFAYNTTVDSGGLLEVMDGGTVTGVDKKAGGKLIVSTNALEVSGPNSKGQFSIKDGVSKNYELDDGSGLIVMEDTQAIDTILDKHATMQSLGKDTGTKVQANAVYDLGRSYQNGSITYSSKAISENMVINNGRANVWAGTMVNVSVRGNDGILEVMKPQINYAPAMLVGKVVVSEGASFRTHGAVDTSKADVSLENSVWTIIADITTTNQNTLLNLANLAMSDANVIMMDEPVTRSSVTASAENFITLTTNTLSGNGNFYMRTDMANHQSDQLNVTGQATGDFKIFVTDTGASPAAGDSLTLVTTGGGDAAFTLGNAGGVVDIGTYEYTLLDNGNHSWSLAENRAQITPSTTDVLNMAAAQPLVFDAELDTVRERLGSVKGVSYDTAMWSSAINTRNNVTTDAGAGFEQTLTGLTLGIDSRFSREESSTIRGLIFGYSHSDIGFDRGGKGNIDSYTLGAYAGWEHQNGAYVDGVVKVDRFANTIHGKMSNGATAFGDYNSNGAGAHVESGFRWVDGLWSVRPYLAFTGFTTDGQDYTLSNGMRADVGNTRILRAEAGTAVSYHMDLQNGTTLEPWLKAAVRQEYADSNQVKVNDDGKFNNDVAGTSGVYQAGIRSSFTPTLSGHLSVSYGNGAGVESPWNTQAGVVWTF.

The N-terminal stretch at Met-1–Ala-29 is a signal peptide. An Autotransporter domain is found at Gly-595 to Phe-863.

Its subcellular location is the cell outer membrane. This is an uncharacterized protein from Escherichia coli (strain K12).